The primary structure comprises 669 residues: MSIRNIGIMAHIDAGKTTTTERIIYYTGKSHKMGDVDSGNTITDWMPQEQERGITISSAAITCHWKDCQINIIDTPGHVDFTAEVERSLRVLDGGIVIFSAVDGIQAQTETVWKQAEKYEIPRLAYVNKMDRIGADFFKVVGDIENKFKTIPLVLQIPIGNESNFEGVVDIILNKELHFSMENGIPKLTYSQIREEFIEKVILFKKKLIDILSQFSEEITQLFLEDKEIGLDIIKREIRRGTISRFIIPVLMGTSLKNIGIEPLIDSIVDYLPSPFEKSFSAFSLDTNKKILVDPNENKKLSALVFKVQYSSVIASHLYFVRVYSGEINPNKKIINASNGKREKFTKIFRVFSNKNEQIDFVKTGDIGAVLGLKFSVTGDTLVEENNNVLLEAVMFPEPVVLMSVEPERSSDEVRLKEIFEIISKEDPTFSYSESKETGQLIISGMGELHLEIILTRIKDEFNLNVYTGKPQVSYRESAGKIVKEVFEFNNIFAGKNIDFKIGMIIKPLSRGAGNKIDFECGIEPVIKSAILRGITSAFVSGIFGYPIIDINVSIFSIVCGANKISESAFESISGFAFHSIFQKSDPIRLEPIMLLEIRTPIEHTGEIISTLNVMGGVIHSVSNIGEYDLIKSEAAFEKLFGYASILRSSTKGRGSFTMEFSYFKEKLS.

In terms of domain architecture, tr-type G spans 1–276; that stretch reads MSIRNIGIMA…SIVDYLPSPF (276 aa). GTP is bound by residues 10–17, 74–78, and 128–131; these read AHIDAGKT, DTPGH, and NKMD.

Belongs to the TRAFAC class translation factor GTPase superfamily. Classic translation factor GTPase family. EF-G/EF-2 subfamily.

Its subcellular location is the cytoplasm. In terms of biological role, catalyzes the GTP-dependent ribosomal translocation step during translation elongation. During this step, the ribosome changes from the pre-translocational (PRE) to the post-translocational (POST) state as the newly formed A-site-bound peptidyl-tRNA and P-site-bound deacylated tRNA move to the P and E sites, respectively. Catalyzes the coordinated movement of the two tRNA molecules, the mRNA and conformational changes in the ribosome. This Borreliella burgdorferi (strain ATCC 35210 / DSM 4680 / CIP 102532 / B31) (Borrelia burgdorferi) protein is Elongation factor G 2 (fusB).